The following is a 124-amino-acid chain: Large ribosomal subunit protein eL31 (124 aa).

Tyr102 is modified (phosphotyrosine).

Belongs to the eukaryotic ribosomal protein eL31 family.

The chain is Large ribosomal subunit protein eL31 (RpL31) from Drosophila melanogaster (Fruit fly).